Here is a 442-residue protein sequence, read N- to C-terminus: Mitochondrial distribution and morphology protein 12 (442 aa).

The region spanning 1 to 442 (MSIDINWEAA…VYPSFWTFLV (442 aa)) is the SMP-LTD domain. 3 disordered regions span residues 67 to 125 (NDFY…RVGY), 202 to 277 (LSLA…RRMR), and 364 to 387 (EGYHDHHNHHHSGNTNTTGSRRSN). The span at 69 to 80 (FYEEDEDGEDLS) shows a compositional bias: acidic residues. The segment covering 90-100 (PSSQGLSQSTP) has biased composition (polar residues). Positions 101–112 (NGDAGSSNSSSN) are enriched in low complexity. The segment covering 213 to 222 (RQRERARSSD) has biased composition (basic and acidic residues). The segment covering 227-245 (SPQSRSRPSTSSTRQRTST) has biased composition (low complexity).

It belongs to the MDM12 family. As to quaternary structure, component of the ER-mitochondria encounter structure (ERMES) or MDM complex, composed of MMM1, MDM10, MDM12 and MDM34. An MMM1 homodimer associates with one molecule of MDM12 on each side in a pairwise head-to-tail manner, and the SMP-LTD domains of MMM1 and MDM12 generate a continuous hydrophobic tunnel for phospholipid trafficking.

It is found in the mitochondrion outer membrane. It localises to the endoplasmic reticulum membrane. Its function is as follows. Component of the ERMES/MDM complex, which serves as a molecular tether to connect the endoplasmic reticulum (ER) and mitochondria. Components of this complex are involved in the control of mitochondrial shape and protein biogenesis, and function in nonvesicular lipid trafficking between the ER and mitochondria. MDM12 is required for the interaction of the ER-resident membrane protein MMM1 and the outer mitochondrial membrane-resident beta-barrel protein MDM10. The MDM12-MMM1 subcomplex functions in the major beta-barrel assembly pathway that is responsible for biogenesis of all mitochondrial outer membrane beta-barrel proteins, and acts in a late step after the SAM complex. The MDM10-MDM12-MMM1 subcomplex further acts in the TOM40-specific pathway after the action of the MDM12-MMM1 complex. Essential for establishing and maintaining the structure of mitochondria and maintenance of mtDNA nucleoids. In Arthroderma otae (strain ATCC MYA-4605 / CBS 113480) (Microsporum canis), this protein is Mitochondrial distribution and morphology protein 12.